Consider the following 230-residue polypeptide: RNA-binding riboflavin kinase RibR (230 aa).

The protein belongs to the RibR family.

The catalysed reaction is riboflavin + ATP = FMN + ADP + H(+). May be directly involved in the regulation of the rib genes. C-terminal part of RibR specifically binds to RFN of the rib leader of the riboflavin biosynthetic operon. The RFN element is a sequence within the rib-leader mRNA reported to serve as a receptor for an FMN-dependent riboswitch. Possibly, RibR produces the comodulator FMN through its own N-terminal flavokinase activity. FMN-activated RibR may stabilize the anti-anti terminator structure of RFN mRNA, causing transcription termination of the rib genes in trans. This chain is RNA-binding riboflavin kinase RibR (ribR), found in Bacillus subtilis (strain 168).